A 142-amino-acid polypeptide reads, in one-letter code: Putative pterin-4-alpha-carbinolamine dehydratase (142 aa).

Belongs to the pterin-4-alpha-carbinolamine dehydratase family.

The catalysed reaction is (4aS,6R)-4a-hydroxy-L-erythro-5,6,7,8-tetrahydrobiopterin = (6R)-L-erythro-6,7-dihydrobiopterin + H2O. This Caenorhabditis elegans protein is Putative pterin-4-alpha-carbinolamine dehydratase (pcbd-1).